The primary structure comprises 358 residues: Methylthioribose-1-phosphate isomerase (358 aa).

Substrate-binding positions include arginine 54–alanine 56, arginine 96, and glutamine 205. Aspartate 246 acts as the Proton donor in catalysis. Asparagine 256–lysine 257 provides a ligand contact to substrate.

The protein belongs to the eIF-2B alpha/beta/delta subunits family. MtnA subfamily.

The catalysed reaction is 5-(methylsulfanyl)-alpha-D-ribose 1-phosphate = 5-(methylsulfanyl)-D-ribulose 1-phosphate. The protein operates within amino-acid biosynthesis; L-methionine biosynthesis via salvage pathway; L-methionine from S-methyl-5-thio-alpha-D-ribose 1-phosphate: step 1/6. Catalyzes the interconversion of methylthioribose-1-phosphate (MTR-1-P) into methylthioribulose-1-phosphate (MTRu-1-P). The sequence is that of Methylthioribose-1-phosphate isomerase from Pseudomonas savastanoi pv. phaseolicola (strain 1448A / Race 6) (Pseudomonas syringae pv. phaseolicola (strain 1448A / Race 6)).